The following is a 229-amino-acid chain: tRNA pseudouridine synthase B (229 aa).

Catalysis depends on aspartate 42, which acts as the Nucleophile.

Belongs to the pseudouridine synthase TruB family. Type 1 subfamily.

It catalyses the reaction uridine(55) in tRNA = pseudouridine(55) in tRNA. In terms of biological role, responsible for synthesis of pseudouridine from uracil-55 in the psi GC loop of transfer RNAs. The protein is tRNA pseudouridine synthase B of Ureaplasma urealyticum serovar 10 (strain ATCC 33699 / Western).